The following is an 872-amino-acid chain: MGLKARRAAGAAGGGGDGGGGGGGAANPAGGDAAAAGDEERKVGLAPGDVEQVTLALGAGADKDGTLLLEGGGRDEGQRRTPQGIGLLAKTPLSRPVKRNNAKYRRIQTLIYDALERPRGWALLYHALVFLIVLGCLILAVLTTFKEYETVSGDWLLLLETFAIFIFGAEFALRIWAAGCCCRYKGWRGRLKFARKPLCMLDIFVLIASVPVVAVGNQGNVLATSLRSLRFLQILRMLRMDRRGGTWKLLGSAICAHSKELITAWYIGFLTLILSSFLVYLVEKDVPEVDAQGEEMKEEFETYADALWWGLITLATIGYGDKTPKTWEGRLIAATFSLIGVSFFALPAGILGSGLALKVQEQHRQKHFEKRRKPAAELIQAAWRYYATNPNRIDLVATWRFYESVVSFPFFRKEQLEAASSQKLGLLDRVRLSNPRGSNTKGKLFTPLNVDAIEESPSKEPKPVGLNNKERFRTAFRMKAYAFWQSSEDAGTGDPMAEDRGYGNDFPIEDMIPTLKAAIRAVRILQFRLYKKKFKETLRPYDVKDVIEQYSAGHLDMLSRIKYLQTRIDMIFTPGPPSTPKHKKSQKGSAFTFPSQQSPRNEPYVARPSTSEIEDQSMMGKFVKVERQVQDMGKKLDFLVDMHMQHMERLQVQVTEYYPTKGTSSPAEAEKKEDNRYSDLKTIICNYSETGPPEPPYSFHQVTIDKVSPYGFFAHDPVNLPRGGPSSGKVQATPPSSATTYVERPTVLPILTLLDSRVSCHSQADLQGPYSDRISPRQRRSITRDSDTPLSLMSVNHEELERSPSGFSISQDRDDYVFGPNGGSSWMREKRYLAEGETDTDTDPFTPSGSMPLSSTGDGISDSVWTPSNKPI.

The tract at residues 1–43 (MGLKARRAAGAAGGGGDGGGGGGGAANPAGGDAAAAGDEERKV) is disordered. At 1 to 120 (MGLKARRAAG…IYDALERPRG (120 aa)) the chain is on the cytoplasmic side. Positions 11-25 (AAGGGGDGGGGGGGA) are enriched in gly residues. Over residues 26 to 36 (ANPAGGDAAAA) the composition is skewed to low complexity. Thr81 is modified (phosphothreonine). A helical transmembrane segment spans residues 121–143 (WALLYHALVFLIVLGCLILAVLT). Residues 144–153 (TFKEYETVSG) lie on the Extracellular side of the membrane. Residues 154–175 (DWLLLLETFAIFIFGAEFALRI) form a helical membrane-spanning segment. Topologically, residues 176–193 (WAAGCCCRYKGWRGRLKF) are cytoplasmic. Residues 194-213 (ARKPLCMLDIFVLIASVPVV) form a helical membrane-spanning segment. Residues 214–225 (AVGNQGNVLATS) are Extracellular-facing. A helical; Voltage-sensor transmembrane segment spans residues 226–244 (LRSLRFLQILRMLRMDRRG). Arg243 is an a 1,2-diacyl-sn-glycero-3-phospho-(1D-myo-inositol-4,5-bisphosphate) binding site. At 245 to 256 (GTWKLLGSAICA) the chain is on the cytoplasmic side. Thr246 bears the Phosphothreonine mark. The helical transmembrane segment at 257–282 (HSKELITAWYIGFLTLILSSFLVYLV) threads the bilayer. Lys259 provides a ligand contact to a 1,2-diacyl-sn-glycero-3-phospho-(1D-myo-inositol-4,5-bisphosphate). At 283 to 302 (EKDVPEVDAQGEEMKEEFET) the chain is on the extracellular side. Residues 303 to 315 (YADALWWGLITLA) constitute an intramembrane region (pore-forming). The short motif at 316–321 (TIGYGD) is the Selectivity filter element. Residues 316–326 (TIGYGDKTPKT) lie on the Extracellular side of the membrane. The chain crosses the membrane as a helical span at residues 327-353 (WEGRLIAATFSLIGVSFFALPAGILGS). Topologically, residues 354-872 (GLALKVQEQH…SVWTPSNKPI (519 aa)) are cytoplasmic. Residues 356 to 537 (ALKVQEQHRQ…RLYKKKFKET (182 aa)) are mediates interaction with calmodulin. Lys366 provides a ligand contact to a 1,2-diacyl-sn-glycero-3-phospho-(1D-myo-inositol-4,5-bisphosphate). Disordered stretches follow at residues 575–611 (GPPS…PSTS) and 764–872 (ADLQ…NKPI). Polar residues-rich tracts occupy residues 587 to 600 (KGSA…QSPR) and 843 to 872 (DPFT…NKPI).

It belongs to the potassium channel family. KQT (TC 1.A.1.15) subfamily. Kv7.3/KCNQ3 sub-subfamily. As to quaternary structure, heterotetramer with KCNQ2; forms heterotetrameric native M-channel responsible for the M-current. Interacts with calmodulin; the interaction is calcium-independent, constitutive and participates in the proper assembly of a functional M-channel. Heteromultimer with KCNQ5. May associate with KCNE2. Interacts with IQCJ-SCHIP1. Interacts (via the pore module) with SLC5A3/SMIT1; forms a coregulatory complex that alters ion selectivity, voltage dependence and gating kinetics of the channel. Post-translationally, KCNQ2/KCNQ3 are ubiquitinated by NEDD4L. Ubiquitination leads to protein degradation. Degradation induced by NEDD4L is inhibited by USP36. In terms of tissue distribution, predominantly expressed in brain.

Its subcellular location is the cell membrane. The catalysed reaction is K(+)(in) = K(+)(out). The enzyme catalyses Rb(+)(in) = Rb(+)(out). It carries out the reaction Cs(+)(in) = Cs(+)(out). It catalyses the reaction Na(+)(in) = Na(+)(out). With respect to regulation, phosphatidylinositol-4,5-bisphosphate (PIP2) potentiates the activation of KCNQ channels by enhancing the electro-mechanical coupling of the voltage-sensing domain (VSD) and the pore-forming domain (PD). In the closed state of the channel, PIP2 is anchored at the S2-S3 loop; upon channel activation, PIP2 interacts with the S4-S5 linker and is involved in channel gating. Calcium suppresses KCNQ2-KCNQ3 channel currents, with calcium-bound calmodulin inducing a change in channel configuration which leads to the reduction of channel affinity for PIP2 and subsequent current suppression. M-channel is activated by the anticonvulsant retigabine. Pore-forming subunit of the voltage-gated potassium (Kv) M-channel which is responsible for the M-current, a key controller of neuronal excitability. M-channel is composed of pore-forming subunits KCNQ2 and KCNQ3 assembled as heterotetramers. The native M-current has a slowly activating and deactivating potassium conductance which plays a critical role in determining the subthreshold electrical excitability of neurons as well as the responsiveness to synaptic inputs. M-channel is selectively permeable in vitro to other cations besides potassium, in decreasing order of affinity K(+) &gt; Rb(+) &gt; Cs(+) &gt; Na(+). M-channel association with SLC5A3/SMIT1 alters channel ion selectivity, increasing Na(+) and Cs(+) permeation relative to K(+). Suppressed by activation of M1 muscarinic acetylcholine receptors. KCNQ3 also associates with KCNQ5 to form a functional channel in vitro and may also contribute to the M-current in brain. The chain is Potassium voltage-gated channel subfamily KQT member 3 from Homo sapiens (Human).